The primary structure comprises 843 residues: DNA-directed RNA polymerase subunit beta' (843 aa).

Residues cysteine 70, cysteine 72, cysteine 85, and cysteine 88 each contribute to the Zn(2+) site. Mg(2+) is bound by residues aspartate 686, aspartate 688, and aspartate 690.

The protein belongs to the RNA polymerase beta' chain family. RpoC1 subfamily. In plastids the minimal PEP RNA polymerase catalytic core is composed of four subunits: alpha, beta, beta', and beta''. When a (nuclear-encoded) sigma factor is associated with the core the holoenzyme is formed, which can initiate transcription. The cofactor is Mg(2+). It depends on Zn(2+) as a cofactor.

The protein localises to the plastid. Its subcellular location is the chloroplast. It carries out the reaction RNA(n) + a ribonucleoside 5'-triphosphate = RNA(n+1) + diphosphate. DNA-dependent RNA polymerase catalyzes the transcription of DNA into RNA using the four ribonucleoside triphosphates as substrates. This is DNA-directed RNA polymerase subunit beta' from Trieres chinensis (Marine centric diatom).